The primary structure comprises 106 residues: Phosphoribosyl-ATP pyrophosphatase (106 aa).

This sequence belongs to the PRA-PH family.

It is found in the cytoplasm. The catalysed reaction is 1-(5-phospho-beta-D-ribosyl)-ATP + H2O = 1-(5-phospho-beta-D-ribosyl)-5'-AMP + diphosphate + H(+). It functions in the pathway amino-acid biosynthesis; L-histidine biosynthesis; L-histidine from 5-phospho-alpha-D-ribose 1-diphosphate: step 2/9. In Rhizorhabdus wittichii (strain DSM 6014 / CCUG 31198 / JCM 15750 / NBRC 105917 / EY 4224 / RW1) (Sphingomonas wittichii), this protein is Phosphoribosyl-ATP pyrophosphatase.